The chain runs to 121 residues: Flagellar protein FliT (121 aa).

Residues Met-1–Leu-50 are required for homodimerization. The interval Met-60–Val-98 is fliD binding.

The protein belongs to the FliT family. Homodimer. Interacts with FliD and FlhC.

It localises to the cytoplasm. The protein resides in the cytosol. In terms of biological role, dual-function protein that regulates the transcription of class 2 flagellar operons and that also acts as an export chaperone for the filament-capping protein FliD. As a transcriptional regulator, acts as an anti-FlhDC factor; it directly binds FlhC, thus inhibiting the binding of the FlhC/FlhD complex to class 2 promoters, resulting in decreased expression of class 2 flagellar operons. As a chaperone, effects FliD transition to the membrane by preventing its premature polymerization, and by directing it to the export apparatus. The chain is Flagellar protein FliT from Escherichia coli O139:H28 (strain E24377A / ETEC).